The chain runs to 407 residues: Putative ammonium transporter MTH_661 (407 aa).

A run of 12 helical transmembrane segments spans residues alanine 9–phenylalanine 29, phenylalanine 47–glycine 67, valine 70–serine 90, phenylalanine 101–valine 121, tryptophan 129–tryptophan 149, phenylalanine 162–valine 182, leucine 196–glycine 216, alanine 226–methionine 246, leucine 257–valine 277, isoleucine 279–tryptophan 299, valine 312–valine 332, and isoleucine 357–leucine 377.

It belongs to the ammonia transporter channel (TC 1.A.11.2) family.

The protein localises to the cell membrane. The polypeptide is Putative ammonium transporter MTH_661 (Methanothermobacter thermautotrophicus (strain ATCC 29096 / DSM 1053 / JCM 10044 / NBRC 100330 / Delta H) (Methanobacterium thermoautotrophicum)).